The primary structure comprises 420 residues: LanC-like protein 3 (420 aa).

This sequence belongs to the LanC-like protein family.

The polypeptide is LanC-like protein 3 (Lancl3) (Mus musculus (Mouse)).